The following is a 219-amino-acid chain: Thiamine-phosphate synthase (219 aa).

Residues 45-49 and N77 each bind 4-amino-2-methyl-5-(diphosphooxymethyl)pyrimidine; that span reads QYREK. D78 and D97 together coordinate Mg(2+). T116 is a 4-amino-2-methyl-5-(diphosphooxymethyl)pyrimidine binding site. Residue 142–144 participates in 2-[(2R,5Z)-2-carboxy-4-methylthiazol-5(2H)-ylidene]ethyl phosphate binding; sequence SFT. K145 lines the 4-amino-2-methyl-5-(diphosphooxymethyl)pyrimidine pocket. Residues G173 and 193–194 each bind 2-[(2R,5Z)-2-carboxy-4-methylthiazol-5(2H)-ylidene]ethyl phosphate; that span reads VT.

It belongs to the thiamine-phosphate synthase family. Requires Mg(2+) as cofactor.

The catalysed reaction is 2-[(2R,5Z)-2-carboxy-4-methylthiazol-5(2H)-ylidene]ethyl phosphate + 4-amino-2-methyl-5-(diphosphooxymethyl)pyrimidine + 2 H(+) = thiamine phosphate + CO2 + diphosphate. The enzyme catalyses 2-(2-carboxy-4-methylthiazol-5-yl)ethyl phosphate + 4-amino-2-methyl-5-(diphosphooxymethyl)pyrimidine + 2 H(+) = thiamine phosphate + CO2 + diphosphate. It catalyses the reaction 4-methyl-5-(2-phosphooxyethyl)-thiazole + 4-amino-2-methyl-5-(diphosphooxymethyl)pyrimidine + H(+) = thiamine phosphate + diphosphate. Its pathway is cofactor biosynthesis; thiamine diphosphate biosynthesis; thiamine phosphate from 4-amino-2-methyl-5-diphosphomethylpyrimidine and 4-methyl-5-(2-phosphoethyl)-thiazole: step 1/1. Functionally, condenses 4-methyl-5-(beta-hydroxyethyl)thiazole monophosphate (THZ-P) and 2-methyl-4-amino-5-hydroxymethyl pyrimidine pyrophosphate (HMP-PP) to form thiamine monophosphate (TMP). This chain is Thiamine-phosphate synthase, found in Caldicellulosiruptor bescii (strain ATCC BAA-1888 / DSM 6725 / KCTC 15123 / Z-1320) (Anaerocellum thermophilum).